A 156-amino-acid polypeptide reads, in one-letter code: Sensor histidine kinase component HK2 (156 aa).

Residues Met1–Arg42 are Extracellular-facing. A helical membrane pass occupies residues Glu43–Ser63. In terms of domain architecture, HAMP spans Arg64–Ala120. The Cytoplasmic portion of the chain corresponds to Arg64–Ser156. In terms of domain architecture, Histidine kinase; first part spans Asp128–Ser156. His131 is subject to Phosphohistidine; by autocatalysis.

As to quaternary structure, homodimer. Each monomer interacts with HK1 and the receiver domain of TcrA. Post-translationally, phosphorylated by HK1.

It is found in the cell membrane. It carries out the reaction ATP + protein L-histidine = ADP + protein N-phospho-L-histidine.. Member of the three-protein two-component system HK1/HK2/TcrA. HK2 transfers its phosphoryl group to TcrA. The polypeptide is Sensor histidine kinase component HK2 (Mycobacterium tuberculosis (strain ATCC 25618 / H37Rv)).